Consider the following 291-residue polypeptide: Protease HtpX (291 aa).

Helical transmembrane passes span 4 to 24 (IALF…VLNI) and 36 to 56 (LSGL…ISLM). A Zn(2+)-binding site is contributed by His-143. Glu-144 is a catalytic residue. His-147 lines the Zn(2+) pocket. A run of 2 helical transmembrane segments spans residues 151-171 (GDMI…IFLS) and 199-219 (FIVS…LTMW). Residue Glu-225 participates in Zn(2+) binding.

It belongs to the peptidase M48B family. Zn(2+) serves as cofactor.

Its subcellular location is the cell inner membrane. The polypeptide is Protease HtpX (Aliivibrio fischeri (strain MJ11) (Vibrio fischeri)).